The sequence spans 589 residues: ATP-dependent lipid A-core flippase (589 aa).

6 helical membrane-spanning segments follow: residues Val-33–Ile-53, Leu-70–Ser-90, Val-148–Leu-168, Gly-170–Ala-190, Leu-262–Glu-282, and Thr-283–Leu-303. Positions Val-33–Lys-315 constitute an ABC transmembrane type-1 domain. Positions Ile-347 to Val-583 constitute an ABC transporter domain. Residue Gly-381–Thr-388 participates in ATP binding.

The protein belongs to the ABC transporter superfamily. Lipid exporter (TC 3.A.1.106) family. In terms of assembly, homodimer.

The protein localises to the cell inner membrane. The enzyme catalyses ATP + H2O + lipid A-core oligosaccharideSide 1 = ADP + phosphate + lipid A-core oligosaccharideSide 2.. Its function is as follows. Involved in lipopolysaccharide (LPS) biosynthesis. Translocates lipid A-core from the inner to the outer leaflet of the inner membrane. Transmembrane domains (TMD) form a pore in the inner membrane and the ATP-binding domain (NBD) is responsible for energy generation. This is ATP-dependent lipid A-core flippase from Alkalilimnicola ehrlichii (strain ATCC BAA-1101 / DSM 17681 / MLHE-1).